Reading from the N-terminus, the 222-residue chain is 2-C-methyl-D-erythritol 4-phosphate cytidylyltransferase (222 aa).

Belongs to the IspD/TarI cytidylyltransferase family. IspD subfamily.

It carries out the reaction 2-C-methyl-D-erythritol 4-phosphate + CTP + H(+) = 4-CDP-2-C-methyl-D-erythritol + diphosphate. Its pathway is isoprenoid biosynthesis; isopentenyl diphosphate biosynthesis via DXP pathway; isopentenyl diphosphate from 1-deoxy-D-xylulose 5-phosphate: step 2/6. Catalyzes the formation of 4-diphosphocytidyl-2-C-methyl-D-erythritol from CTP and 2-C-methyl-D-erythritol 4-phosphate (MEP). The protein is 2-C-methyl-D-erythritol 4-phosphate cytidylyltransferase of Thermotoga petrophila (strain ATCC BAA-488 / DSM 13995 / JCM 10881 / RKU-1).